Reading from the N-terminus, the 313-residue chain is D-alanine--D-alanine ligase (313 aa).

An ATP-grasp domain is found at 108–308 (KLVWQQTGVP…YSELVVKVLS (201 aa)). An ATP-binding site is contributed by 138–193 (VAKLGLPLFVKPASEGSSVAVLKVKTADALPAALSEAATHDKIVIVEKSIEGGGEY). Mg(2+) is bound by residues aspartate 262, glutamate 275, and asparagine 277.

The protein belongs to the D-alanine--D-alanine ligase family. It depends on Mg(2+) as a cofactor. The cofactor is Mn(2+).

The protein resides in the cytoplasm. It catalyses the reaction 2 D-alanine + ATP = D-alanyl-D-alanine + ADP + phosphate + H(+). Its pathway is cell wall biogenesis; peptidoglycan biosynthesis. Functionally, cell wall formation. This Burkholderia vietnamiensis (strain G4 / LMG 22486) (Burkholderia cepacia (strain R1808)) protein is D-alanine--D-alanine ligase.